Consider the following 289-residue polypeptide: ATP synthase subunit gamma, mitochondrial (289 aa).

The protein belongs to the ATPase gamma chain family. As to quaternary structure, F-type ATPases have 2 components, CF(1) - the catalytic core - and CF(0) - the membrane proton channel. CF(1) has five subunits: alpha(3), beta(3), gamma(1), delta(1), epsilon(1). CF(0) has three main subunits: a, b and c.

The protein localises to the mitochondrion. Its subcellular location is the mitochondrion inner membrane. Functionally, mitochondrial membrane ATP synthase (F(1)F(0) ATP synthase or Complex V) produces ATP from ADP in the presence of a proton gradient across the membrane which is generated by electron transport complexes of the respiratory chain. F-type ATPases consist of two structural domains, F(1) - containing the extramembraneous catalytic core, and F(0) - containing the membrane proton channel, linked together by a central stalk and a peripheral stalk. During catalysis, ATP synthesis in the catalytic domain of F(1) is coupled via a rotary mechanism of the central stalk subunits to proton translocation. Part of the complex F(1) domain and the central stalk which is part of the complex rotary element. The gamma subunit protrudes into the catalytic domain formed of alpha(3)beta(3). Rotation of the central stalk against the surrounding alpha(3)beta(3) subunits leads to hydrolysis of ATP in three separate catalytic sites on the beta subunits. In Kluyveromyces lactis (strain ATCC 8585 / CBS 2359 / DSM 70799 / NBRC 1267 / NRRL Y-1140 / WM37) (Yeast), this protein is ATP synthase subunit gamma, mitochondrial (ATP3).